A 546-amino-acid chain; its full sequence is Chaperonin GroEL (546 aa).

Residues 29–32, lysine 50, 86–90, glycine 415, and aspartate 495 contribute to the ATP site; these read TLGP and DGTTT. The segment at 526 to 546 is disordered; that stretch reads EDNAGGGGMPQGMGGGMPGMM. Gly residues predominate over residues 529–546; the sequence is AGGGGMPQGMGGGMPGMM.

It belongs to the chaperonin (HSP60) family. As to quaternary structure, forms a cylinder of 14 subunits composed of two heptameric rings stacked back-to-back. Interacts with the co-chaperonin GroES.

Its subcellular location is the cytoplasm. The enzyme catalyses ATP + H2O + a folded polypeptide = ADP + phosphate + an unfolded polypeptide.. Together with its co-chaperonin GroES, plays an essential role in assisting protein folding. The GroEL-GroES system forms a nano-cage that allows encapsulation of the non-native substrate proteins and provides a physical environment optimized to promote and accelerate protein folding. In Christiangramia forsetii (strain DSM 17595 / CGMCC 1.15422 / KT0803) (Gramella forsetii), this protein is Chaperonin GroEL.